A 188-amino-acid polypeptide reads, in one-letter code: Molybdopterin synthase catalytic subunit (188 aa).

Positions 1-10 (MSTSETSSYT) are enriched in polar residues. Residues 1 to 21 (MSTSETSSYTPDIPSEPVTKT) form a disordered region. Substrate is bound by residues 123-124 (HR), Lys139, and 146-148 (KLE).

It belongs to the MoaE family. MOCS2B subfamily. Heterotetramer; composed of 2 small (MOCS2A) and 2 large (MOCS2B) subunits.

It is found in the cytoplasm. The enzyme catalyses 2 [molybdopterin-synthase sulfur-carrier protein]-C-terminal-Gly-aminoethanethioate + cyclic pyranopterin phosphate + H2O = molybdopterin + 2 [molybdopterin-synthase sulfur-carrier protein]-C-terminal Gly-Gly + 2 H(+). Its pathway is cofactor biosynthesis; molybdopterin biosynthesis. In terms of biological role, catalytic subunit of the molybdopterin synthase complex, a complex that catalyzes the conversion of precursor Z into molybdopterin. Acts by mediating the incorporation of 2 sulfur atoms from thiocarboxylated MOCS2A into precursor Z to generate a dithiolene group. This is Molybdopterin synthase catalytic subunit from Phaeosphaeria nodorum (strain SN15 / ATCC MYA-4574 / FGSC 10173) (Glume blotch fungus).